A 255-amino-acid polypeptide reads, in one-letter code: tRNA (guanine-N(7)-)-methyltransferase (255 aa).

Positions 1 to 21 (MMHDDPNEAGLPPHDDAIPDE) are disordered. 4 residues coordinate S-adenosyl-L-methionine: E86, E111, D138, and D161. The active site involves D161. Residues K165, D197, and 232 to 235 (TKFE) contribute to the substrate site.

The protein belongs to the class I-like SAM-binding methyltransferase superfamily. TrmB family.

The enzyme catalyses guanosine(46) in tRNA + S-adenosyl-L-methionine = N(7)-methylguanosine(46) in tRNA + S-adenosyl-L-homocysteine. It participates in tRNA modification; N(7)-methylguanine-tRNA biosynthesis. Functionally, catalyzes the formation of N(7)-methylguanine at position 46 (m7G46) in tRNA. In Burkholderia lata (strain ATCC 17760 / DSM 23089 / LMG 22485 / NCIMB 9086 / R18194 / 383), this protein is tRNA (guanine-N(7)-)-methyltransferase.